A 273-amino-acid polypeptide reads, in one-letter code: Undecaprenyl-diphosphatase (273 aa).

7 consecutive transmembrane segments (helical) span residues serine 6–serine 26, alanine 45–tryptophan 65, leucine 90–histidine 110, leucine 116–alanine 136, tyrosine 190–leucine 210, glycine 222–isoleucine 242, and isoleucine 252–phenylalanine 272.

It belongs to the UppP family.

Its subcellular location is the cell inner membrane. It catalyses the reaction di-trans,octa-cis-undecaprenyl diphosphate + H2O = di-trans,octa-cis-undecaprenyl phosphate + phosphate + H(+). Its function is as follows. Catalyzes the dephosphorylation of undecaprenyl diphosphate (UPP). Confers resistance to bacitracin. The protein is Undecaprenyl-diphosphatase of Escherichia coli O127:H6 (strain E2348/69 / EPEC).